A 421-amino-acid polypeptide reads, in one-letter code: D-amino acid dehydrogenase (421 aa).

4-18 lines the FAD pocket; that stretch reads VLVLGSGVVGLTSAW.

Belongs to the DadA oxidoreductase family. FAD is required as a cofactor.

The enzyme catalyses a D-alpha-amino acid + A + H2O = a 2-oxocarboxylate + AH2 + NH4(+). Its function is as follows. Oxidative deamination of D-amino acids. The polypeptide is D-amino acid dehydrogenase (Vibrio cholerae serotype O1 (strain ATCC 39315 / El Tor Inaba N16961)).